The primary structure comprises 153 residues: Penitrem biosynthesis cluster 1 protein I (153 aa).

It functions in the pathway secondary metabolite biosynthesis. In terms of biological role, part of the gene cluster that mediates the biosynthesis of the indole diterpenes penitrems. The geranylgeranyl diphosphate (GGPP) synthase ptmG catalyzes the first step in penitrem biosynthesis via conversion of farnesyl pyrophosphate and isopentyl pyrophosphate into geranylgeranyl pyrophosphate (GGPP). Condensation of indole-3-glycerol phosphate with GGPP by the prenyl transferase ptmC then forms 3-geranylgeranylindole (3-GGI). Epoxidation by the FAD-dependent monooxygenase ptmM leads to a epoxidized-GGI that is substrate of the terpene cyclase ptmB for cyclization to yield paspaline. Paspaline is subsequently converted to 13-desoxypaxilline by the cytochrome P450 monooxygenase ptmP, the latter being then converted to paxilline by the cytochrome P450 monooxygenase ptmQ. Paxilline is converted to beta-paxitriol via C-10 ketoreduction by the short-chain dehydrogenase ptmH which can be monoprenylated at the C-20 by the indole diterpene prenyltransferase ptmD. A two-step elimination (acetylation and elimination) process performed by the O-acetyltransferase ptmV and ptmI leads to the production of the prenylated form of penijanthine. The FAD-linked oxidoreductase ptmO then converts the prenylated form of penijanthine into PC-M5 which is in turn transformed into PC-M4 by the aromatic dimethylallyltransferase ptmE. Five sequential oxidative transformations performed by the cytochrome P450 monooxygenases ptmK, ptmU, ptmL, ptmN and ptmJ yield the various penitrem compounds. PtmK, ptmU and ptmM are involved in the formation of the key bicyclic ring of penitrem C via the formation of the intermediates secopenitrem D and penitrem D. PtmL catalyzes the epoxidation of penitrem D and C to yield penitrem B and F, respectively. PtmJ catalyzes the last benzylic hydroxylation to convert penitrem B to prenitrem E and penitrem F to penitrem A. In Penicillium ochrochloron, this protein is Penitrem biosynthesis cluster 1 protein I.